The chain runs to 192 residues: PTS-dependent dihydroxyacetone kinase, ADP-binding subunit DhaL (192 aa).

A DhaL domain is found at 5 to 189; sequence DTTIEWLGKF…SAYLFETLLE (185 aa). Residues Asp29, Asp34, and Asp36 each contribute to the Mg(2+) site. ADP is bound by residues 37–40, 78–79, Gly115, Met124, Arg161, and 174–176; these read HGAN, AS, and DPG.

In terms of assembly, homodimer. The dihydroxyacetone kinase complex is composed of a homodimer of DhaM, a homodimer of DhaK and the subunit DhaL. It depends on Mg(2+) as a cofactor.

It is found in the cytoplasm. The enzyme catalyses dihydroxyacetone + phosphoenolpyruvate = dihydroxyacetone phosphate + pyruvate. It participates in polyol metabolism; glycerol degradation. Functionally, ADP-binding subunit of the dihydroxyacetone kinase, which is responsible for the phosphoenolpyruvate (PEP)-dependent phosphorylation of dihydroxyacetone. DhaL-ADP is converted to DhaL-ATP via a phosphoryl group transfer from DhaM and transmits it to dihydroxyacetone binds to DhaK. The protein is PTS-dependent dihydroxyacetone kinase, ADP-binding subunit DhaL of Lactococcus lactis subsp. lactis (strain IL1403) (Streptococcus lactis).